The primary structure comprises 139 residues: Protein archease (139 aa).

Ca(2+) contacts are provided by aspartate 12, aspartate 138, and isoleucine 139.

The protein belongs to the archease family.

In terms of biological role, activates the tRNA-splicing ligase complex by facilitating the enzymatic turnover of catalytic subunit RtcB. Acts by promoting the guanylylation of RtcB, a key intermediate step in tRNA ligation. Can also alter the NTP specificity of RtcB such that ATP, dGTP or ITP is used efficiently. The chain is Protein archease from Saccharolobus islandicus (strain M.16.27) (Sulfolobus islandicus).